Here is a 258-residue protein sequence, read N- to C-terminus: Acetylglutamate kinase (258 aa).

Substrate-binding positions include 44–45 (GG), arginine 66, and asparagine 158. Residues 181–186 (DVSGIL) and 209–211 (IIT) contribute to the ATP site.

The protein belongs to the acetylglutamate kinase family. ArgB subfamily. Homodimer.

It localises to the cytoplasm. The catalysed reaction is N-acetyl-L-glutamate + ATP = N-acetyl-L-glutamyl 5-phosphate + ADP. It participates in amino-acid biosynthesis; L-arginine biosynthesis; N(2)-acetyl-L-ornithine from L-glutamate: step 2/4. In terms of biological role, catalyzes the ATP-dependent phosphorylation of N-acetyl-L-glutamate. The chain is Acetylglutamate kinase from Klebsiella pneumoniae subsp. pneumoniae (strain ATCC 700721 / MGH 78578).